The following is a 310-amino-acid chain: Putative F-box protein PP2-B2 (310 aa).

A disordered region spans residues 1-34 (MIQSTMGHKQSVDSRGKGRKVPGSSSMVQKHRVE). Residues 44 to 90 (PSLFDNLPEDCISNIISFTSPRDACVAASVSKTFESAVNSDSVWDKF) form the F-box domain.

This Arabidopsis thaliana (Mouse-ear cress) protein is Putative F-box protein PP2-B2 (PP2B2).